A 213-amino-acid chain; its full sequence is Thymidylate kinase (213 aa).

Gly-11–Thr-18 is an ATP binding site.

The protein belongs to the thymidylate kinase family.

The enzyme catalyses dTMP + ATP = dTDP + ADP. Phosphorylation of dTMP to form dTDP in both de novo and salvage pathways of dTTP synthesis. The sequence is that of Thymidylate kinase from Leuconostoc mesenteroides subsp. mesenteroides (strain ATCC 8293 / DSM 20343 / BCRC 11652 / CCM 1803 / JCM 6124 / NCDO 523 / NBRC 100496 / NCIMB 8023 / NCTC 12954 / NRRL B-1118 / 37Y).